Consider the following 454-residue polypeptide: GTPase Der (454 aa).

2 EngA-type G domains span residues 4-167 (AIVA…SEDK) and 188-363 (LQLA…ASWQ). GTP is bound by residues 10-17 (GKPNVGKS), 56-60 (DTPGL), 121-124 (NKTE), 194-201 (GRPNCGKS), 241-245 (DTAGV), and 306-309 (NKCD). Residues 364–450 (KRVTTGTLNQ…PVRLSFVKGK (87 aa)) enclose the KH-like domain.

The protein belongs to the TRAFAC class TrmE-Era-EngA-EngB-Septin-like GTPase superfamily. EngA (Der) GTPase family. As to quaternary structure, associates with the 50S ribosomal subunit.

In terms of biological role, GTPase that plays an essential role in the late steps of ribosome biogenesis. The sequence is that of GTPase Der from Orientia tsutsugamushi (strain Boryong) (Rickettsia tsutsugamushi).